The sequence spans 499 residues: Endoglucanase (499 aa).

The N-terminal stretch at 1–29 is a signal peptide; it reads MKRSISIFITCLLIAVLTMGGLLPSPASA. Residues His-65, 69 to 70, Tyr-96, and His-131 contribute to the substrate site; that span reads WY. Glu-169 serves as the catalytic Proton donor. Residue Tyr-231 participates in substrate binding. Glu-257 (nucleophile) is an active-site residue. Residues 263–264, Trp-291, and 296–298 each bind substrate; these read AS and KQE. Positions 330 to 340 are enriched in basic and acidic residues; sequence RGTKDSTKDVP. Residues 330–353 form a disordered region; the sequence is RGTKDSTKDVPETPAQDNPTQEKG. One can recognise a CBM3 domain in the interval 350–499; the sequence is QEKGVSVQYK…GKLIWGTEPN (150 aa).

The protein belongs to the glycosyl hydrolase 5 (cellulase A) family.

It catalyses the reaction Endohydrolysis of (1-&gt;4)-beta-D-glucosidic linkages in cellulose, lichenin and cereal beta-D-glucans.. The polypeptide is Endoglucanase (bglC) (Bacillus subtilis).